A 309-amino-acid chain; its full sequence is Tagatose-6-phosphate kinase (309 aa).

Belongs to the carbohydrate kinase PfkB family. LacC subfamily.

The enzyme catalyses D-tagatofuranose 6-phosphate + ATP = D-tagatofuranose 1,6-bisphosphate + ADP + H(+). It functions in the pathway carbohydrate metabolism; D-tagatose 6-phosphate degradation; D-glyceraldehyde 3-phosphate and glycerone phosphate from D-tagatose 6-phosphate: step 1/2. The chain is Tagatose-6-phosphate kinase from Streptococcus pneumoniae (strain P1031).